The sequence spans 149 residues: Large ribosomal subunit protein bL9 (149 aa).

The protein belongs to the bacterial ribosomal protein bL9 family.

Its function is as follows. Binds to the 23S rRNA. This is Large ribosomal subunit protein bL9 from Desulforamulus reducens (strain ATCC BAA-1160 / DSM 100696 / MI-1) (Desulfotomaculum reducens).